A 249-amino-acid polypeptide reads, in one-letter code: Uridylate kinase (249 aa).

13-16 is a binding site for ATP; sequence KLSG. Glycine 55 lines the UMP pocket. Residues glycine 56 and arginine 60 each coordinate ATP. UMP is bound by residues aspartate 75 and 136-143; that span reads IGNPFFTT. Threonine 163, phenylalanine 169, and aspartate 172 together coordinate ATP.

Belongs to the UMP kinase family. In terms of assembly, homohexamer.

The protein resides in the cytoplasm. The catalysed reaction is UMP + ATP = UDP + ADP. It participates in pyrimidine metabolism; CTP biosynthesis via de novo pathway; UDP from UMP (UMPK route): step 1/1. With respect to regulation, inhibited by UTP. Functionally, catalyzes the reversible phosphorylation of UMP to UDP. In Baumannia cicadellinicola subsp. Homalodisca coagulata, this protein is Uridylate kinase.